The sequence spans 325 residues: GMP reductase (325 aa).

Cys174 functions as the Thioimidate intermediate in the catalytic mechanism. Residue 203–226 (LIADGGIRTHGDIAKSIRFGASMV) coordinates NADP(+).

This sequence belongs to the IMPDH/GMPR family. GuaC type 2 subfamily.

It carries out the reaction IMP + NH4(+) + NADP(+) = GMP + NADPH + 2 H(+). Functionally, catalyzes the irreversible NADPH-dependent deamination of GMP to IMP. It functions in the conversion of nucleobase, nucleoside and nucleotide derivatives of G to A nucleotides, and in maintaining the intracellular balance of A and G nucleotides. In Staphylococcus aureus (strain MRSA252), this protein is GMP reductase.